A 350-amino-acid chain; its full sequence is 3-dehydroquinate synthase (350 aa).

NAD(+)-binding positions include 106 to 110, 130 to 131, K143, and K152; these read GVIGD and TS. The Zn(2+) site is built by E185, H246, and H263.

Belongs to the sugar phosphate cyclases superfamily. Dehydroquinate synthase family. Requires Co(2+) as cofactor. It depends on Zn(2+) as a cofactor. NAD(+) is required as a cofactor.

It localises to the cytoplasm. It carries out the reaction 7-phospho-2-dehydro-3-deoxy-D-arabino-heptonate = 3-dehydroquinate + phosphate. The protein operates within metabolic intermediate biosynthesis; chorismate biosynthesis; chorismate from D-erythrose 4-phosphate and phosphoenolpyruvate: step 2/7. Functionally, catalyzes the conversion of 3-deoxy-D-arabino-heptulosonate 7-phosphate (DAHP) to dehydroquinate (DHQ). The chain is 3-dehydroquinate synthase from Clostridium botulinum (strain Alaska E43 / Type E3).